We begin with the raw amino-acid sequence, 132 residues long: Small ribosomal subunit protein uS11 (132 aa).

It belongs to the universal ribosomal protein uS11 family. As to quaternary structure, part of the 30S ribosomal subunit. Interacts with proteins S7 and S18. Binds to IF-3.

Its function is as follows. Located on the platform of the 30S subunit, it bridges several disparate RNA helices of the 16S rRNA. Forms part of the Shine-Dalgarno cleft in the 70S ribosome. In Cupriavidus pinatubonensis (strain JMP 134 / LMG 1197) (Cupriavidus necator (strain JMP 134)), this protein is Small ribosomal subunit protein uS11.